The chain runs to 464 residues: MEAKKLWGGRFEASLEEWVEEFGASIRFDQKLAKYDIQGSLAHVKMLGQTRIISQAEAQVIQAGLEELLEEYEAGKLVFDIRNEDIHMNIESLLTEKIGSVAGKLHTARSRNDQVATDMHLYLKDTLFQVVDKLTNLRQILVDLAQEHVETIMPGYTHLQHAQPISFAQHLLAYYNMFSRDSERFAFNMQHTNVSPLGAAALAGTTFPIDRQMTSDLMGFAKPYSNSLDAVSDRDFILEFLSNASILMMHMSRLCEEIINWCSYEYQFVTLSDTFSTGSSIMPQKKNPDMAELIRGKTGRVYGNLVGLLTVMKSLPLTYNKDLQEDKEGMFDTAETVLISIDILAGMLKTMTVHKERMAQSTEKDFSNATELADYLASKGLPFRQAHEIVGKLVLECSKAGHYLQDVSFETYQAISPLIQADIYDALSSKVAVSRRNSLGGTGFESIADQLKSAKEEIQNAKSL.

The protein belongs to the lyase 1 family. Argininosuccinate lyase subfamily.

It is found in the cytoplasm. The catalysed reaction is 2-(N(omega)-L-arginino)succinate = fumarate + L-arginine. It participates in amino-acid biosynthesis; L-arginine biosynthesis; L-arginine from L-ornithine and carbamoyl phosphate: step 3/3. This chain is Argininosuccinate lyase, found in Streptococcus suis (strain 98HAH33).